The sequence spans 517 residues: Putative ribose/galactose/methyl galactoside import ATP-binding protein 1 (517 aa).

ABC transporter domains are found at residues 23-258 (LQLQ…VGRP) and 269-515 (TPTD…SGRS). 55–62 (GENGAGKS) contacts ATP.

Belongs to the ABC transporter superfamily. Carbohydrate importer 2 (CUT2) (TC 3.A.1.2) family.

Its subcellular location is the cell inner membrane. It carries out the reaction D-ribose(out) + ATP + H2O = D-ribose(in) + ADP + phosphate + H(+). The enzyme catalyses D-galactose(out) + ATP + H2O = D-galactose(in) + ADP + phosphate + H(+). In terms of biological role, part of an ABC transporter complex involved in carbohydrate import. Could be involved in ribose, galactose and/or methyl galactoside import. Responsible for energy coupling to the transport system. The sequence is that of Putative ribose/galactose/methyl galactoside import ATP-binding protein 1 from Burkholderia ambifaria (strain ATCC BAA-244 / DSM 16087 / CCUG 44356 / LMG 19182 / AMMD) (Burkholderia cepacia (strain AMMD)).